Here is a 440-residue protein sequence, read N- to C-terminus: Virion host shutoff protein (440 aa).

Disordered stretches follow at residues 98 to 144 (NIDH…RRKT) and 265 to 312 (IDEP…AGPG). The span at 266-281 (DEPPAASEESSASDQQ) shows a compositional bias: low complexity.

It belongs to the herpesviridae VHS protein family.

It is found in the virion. Its function is as follows. Minor structural protein that acts as an endoribonuclease during lytic infection. Degrades host mRNAs in the cytoplasm by cutting them at preferred sites, including some in regions of translation initiation. The chain is Virion host shutoff protein (UL41) from Amazona oratrix (yellow-headed parrot).